The sequence spans 331 residues: Aflatoxin B1 aldehyde reductase member 4 (331 aa).

Residue Asp44 participates in NADP(+) binding. The active-site Proton donor is Tyr49. Ser85 carries the phosphoserine modification. His113 provides a ligand contact to substrate. Residues 143–144, Gln169, 198–208, and Arg222 each bind NADP(+); these read SN and NPLAGGLLTGK. Tyr232 is a binding site for substrate. 290 to 298 lines the NADP(+) pocket; that stretch reads SSLEQLEQN.

It belongs to the aldo/keto reductase family. Aldo/keto reductase 2 subfamily. In terms of tissue distribution, mainly expressed in uterus.

Functionally, can reduce the dialdehyde protein-binding form of aflatoxin B1 (AFB1) to the non-binding AFB1 dialcohol. May be involved in protection of liver against the toxic and carcinogenic effects of AFB1, a potent hepatocarcinogen. This is Aflatoxin B1 aldehyde reductase member 4 (AKR7L) from Homo sapiens (Human).